The chain runs to 196 residues: Carnitine operon protein CaiE (196 aa).

Residues 173–196 (TQPLRQMEENRPRLQGTTDVTPKR) form a disordered region. The span at 187-196 (QGTTDVTPKR) shows a compositional bias: polar residues.

This sequence belongs to the transferase hexapeptide repeat family.

Its pathway is amine and polyamine metabolism; carnitine metabolism. In terms of biological role, overproduction of CaiE stimulates the activity of CaiB and CaiD. This is Carnitine operon protein CaiE from Shigella dysenteriae serotype 1 (strain Sd197).